We begin with the raw amino-acid sequence, 33 residues long: Kappa-sparatoxin-Hv1a (33 aa).

Disulfide bonds link Cys-2/Cys-17, Cys-9/Cys-22, and Cys-16/Cys-27. Tryptophan amide is present on Trp-33.

Expressed by the venom gland.

It localises to the secreted. Its function is as follows. Blocks transient outward voltage-gated potassium channels in rat ventricular myocytes (thus prolonging action-potential duration) and rat Kv4.2/KCNA4 channels expressed in Xenopus oocytes. Is also a weak blocker of calcium channels in rat cerebellar granule cells. This is Kappa-sparatoxin-Hv1a from Heteropoda venatoria (Brown huntsman spider).